Reading from the N-terminus, the 406-residue chain is MSADPFVIVGAGHAARRTAEALRARDADAPIVMIGAERELPYDRPALSKDALLNDDGEQRAFVRDAAWYDAQRIALRLGTRVDAIEREAQRVRLDDGTTLPYAKLVLATGSRVRTFGGPIDAGVVAHYVRTVADARALRAQLVRGRRVAVLGGGFIGLEVAAAARQLGCNVTVIDPAARLLQRALPEVVGAYAHRLHDERGVGFQMATLPRAIRAAAGGGAIVETDRGDVHADVVVVGIGVLPNVELAQAAGLDVDNGIRVDAGCRTADRAIFAAGEVTMHFNPLLGRHVRIESWQVAENQPAVAAANLLGADDAYAELPWLWSDQYDCNLQMLGLFGAGQTTVVRGDPARGPFTVFGLGGDGRIVAAAAVNLGRDIGAARRLIAAGAMPDPQQLADPTVGLKTFL.

5–37 provides a ligand contact to FAD; it reads PFVIVGAGHAARRTAEALRARDADAPIVMIGAE. Residue 152–161 coordinates NAD(+); that stretch reads GGGFIGLEVA.

This sequence belongs to the FAD-dependent oxidoreductase family. In terms of assembly, part of a multicomponent enzyme system composed of a reductase (AndAa), a ferredoxin (AndAb) and a two-subunit oxygenase component (AndAc and AndAd). FAD serves as cofactor.

The enzyme catalyses 2 reduced [2Fe-2S]-[ferredoxin] + NAD(+) + H(+) = 2 oxidized [2Fe-2S]-[ferredoxin] + NADH. It functions in the pathway aromatic compound metabolism; anthranilate degradation via hydroxylation; catechol from anthranilate: step 1/1. Functionally, part of the multicomponent anthranilate dioxygenase, that converts anthranilate to catechol. Probably transfers electrons from ferredoxin (AndAb) to NADH. In Burkholderia cepacia (Pseudomonas cepacia), this protein is Anthranilate 1,2-dioxygenase system ferredoxin--NAD(+) reductase component.